Reading from the N-terminus, the 57-residue chain is uncharacterized protein (57 aa).

This is an uncharacterized protein from Haemophilus influenzae (strain ATCC 51907 / DSM 11121 / KW20 / Rd).